Consider the following 145-residue polypeptide: Ribosomal RNA large subunit methyltransferase H (145 aa).

Residues Leu-64, Gly-93, and 112–117 each bind S-adenosyl-L-methionine; that span reads LSPLTF.

It belongs to the RNA methyltransferase RlmH family. As to quaternary structure, homodimer.

The protein localises to the cytoplasm. It catalyses the reaction pseudouridine(1915) in 23S rRNA + S-adenosyl-L-methionine = N(3)-methylpseudouridine(1915) in 23S rRNA + S-adenosyl-L-homocysteine + H(+). Specifically methylates the pseudouridine at position 1915 (m3Psi1915) in 23S rRNA. This chain is Ribosomal RNA large subunit methyltransferase H, found in Prochlorococcus marinus (strain NATL2A).